Reading from the N-terminus, the 325-residue chain is Probable cell division protein WhiA (325 aa).

A DNA-binding region (H-T-H motif) is located at residues 280–313 (SLKELGSMLKNPLGKSGVNHRLRKIDKIAEELRK).

This sequence belongs to the WhiA family.

Its function is as follows. Involved in cell division and chromosome segregation. The sequence is that of Probable cell division protein WhiA from Caldicellulosiruptor saccharolyticus (strain ATCC 43494 / DSM 8903 / Tp8T 6331).